Here is a 404-residue protein sequence, read N- to C-terminus: Activity-regulated cytoskeleton-associated protein (404 aa).

Residues 51–78 are a coiled coil; sequence EVSKQVERELKGLQKSVGKLENNLEDHV. Residues 351-404 form a disordered region; the sequence is VQGNMDHSEEPSPQRTPEIQSGDSVESMPPSTTASPVPSNGTQPEPPSPPATVI. A compositionally biased stretch (polar residues) spans 363-393; that stretch reads PQRTPEIQSGDSVESMPPSTTASPVPSNGTQ. Positions 394–404 are enriched in pro residues; it reads PEPPSPPATVI.

The protein belongs to the ARC/ARG3.1 family. As to quaternary structure, homooligomer; homooligomerizes into virion-like capsids. Post-translationally, palmitoylation anchors the protein into the membrane by allowing direct insertion into the hydrophobic core of the lipid bilayer. Expressed at various levels throughout the brain.

Its subcellular location is the extracellular vesicle membrane. It localises to the postsynaptic cell membrane. It is found in the synapse. The protein resides in the postsynaptic density. The protein localises to the early endosome membrane. Its subcellular location is the cell projection. It localises to the dendrite. It is found in the cytoplasm. The protein resides in the cytoskeleton. The protein localises to the cell cortex. Its subcellular location is the dendritic spine. Its function is as follows. Master regulator of synaptic plasticity that self-assembles into virion-like capsids that encapsulate RNAs and mediate intercellular RNA transfer in the nervous system. ARC protein is released from neurons in extracellular vesicles that mediate the transfer of ARC mRNA into new target cells, where ARC mRNA can undergo activity-dependent translation. ARC capsids are endocytosed and are able to transfer ARC mRNA into the cytoplasm of neurons. Acts as a key regulator of synaptic plasticity: required for protein synthesis-dependent forms of long-term potentiation (LTP) and depression (LTD) and for the formation of long-term memory. Regulates synaptic plasticity by promoting endocytosis of AMPA receptors (AMPARs) in response to synaptic activity: this endocytic pathway maintains levels of surface AMPARs in response to chronic changes in neuronal activity through synaptic scaling, thereby contributing to neuronal homeostasis. Acts as a postsynaptic mediator of activity-dependent synapse elimination in the developing cerebellum by mediating elimination of surplus climbing fiber synapses. Accumulates at weaker synapses, probably to prevent their undesired enhancement. This suggests that ARC-containing virion-like capsids may be required to eliminate synaptic material. This chain is Activity-regulated cytoskeleton-associated protein, found in Gallus gallus (Chicken).